Consider the following 382-residue polypeptide: Cytochrome b (382 aa).

4 helical membrane-spanning segments follow: residues 36–56 (FGSL…FLTM), 80–101 (WLIR…YLHI), 116–136 (WFIG…GYVL), and 181–201 (FYTF…IHLL). Histidine 86 and histidine 100 together coordinate heme b. Histidine 185 and histidine 199 together coordinate heme b. A ubiquinone is bound at residue histidine 204. The next 4 membrane-spanning stretches (helical) occupy residues 229-249 (YKDL…TLSN), 291-311 (LGGV…PLTF), 323-343 (INQF…WIGA), and 350-370 (YIIT…LNPL).

The protein belongs to the cytochrome b family. In terms of assembly, the main subunits of complex b-c1 are: cytochrome b, cytochrome c1 and the Rieske protein. Heme b is required as a cofactor.

The protein localises to the mitochondrion inner membrane. Its function is as follows. Component of the ubiquinol-cytochrome c reductase complex (complex III or cytochrome b-c1 complex) that is part of the mitochondrial respiratory chain. The b-c1 complex mediates electron transfer from ubiquinol to cytochrome c. Contributes to the generation of a proton gradient across the mitochondrial membrane that is then used for ATP synthesis. In Samia ricini (Indian eri silkmoth), this protein is Cytochrome b (MT-CYB).